The chain runs to 251 residues: uncharacterized protein (251 aa).

This is an uncharacterized protein from Mycoplasma genitalium (strain ATCC 33530 / DSM 19775 / NCTC 10195 / G37) (Mycoplasmoides genitalium).